The following is a 521-amino-acid chain: Zinc finger protein GLIS2 (521 aa).

The tract at residues 35 to 174 (ALHRELGLVD…AKQLVCRWAK (140 aa)) is interaction with CTNND1. Disordered regions lie at residues 41-63 (GLVD…LLNP) and 84-110 (SPPS…DLPP). Residues 49 to 58 (PGSPGSPPPG) show a composition bias toward pro residues. The tract at residues 71-137 (GRFSAAPLVD…SSFQFFLPLG (67 aa)) is transcription activation. Positions 84–100 (SPPSGLDSPNGSSSLSP) are enriched in low complexity. The segment at 148-171 (SFLPPPKDKCLSPELPLAKQLVCR) is transcription repression. Residues 168-193 (LVCRWAKCNQLFELLQDLVDHVNDHH) form a C2H2-type 1 zinc finger. The segment at 202 to 229 (YCCHWEGCARHGRGFNARYKMLIHIRTH) adopts a C2H2-type 2; atypical zinc-finger fold. 3 C2H2-type zinc fingers span residues 235–257 (HRCP…NRSH), 263–287 (YVCP…TRTH), and 293–317 (YYCK…IKAH). Positions 436-501 (AGSKAEGEKG…NSAASSPEVL (66 aa)) are disordered. The span at 455–470 (GLEDHKTPLERTERSR) shows a compositional bias: basic and acidic residues. The segment covering 487–496 (DLSTGNSAAS) has biased composition (polar residues).

The protein belongs to the GLI C2H2-type zinc-finger protein family. In terms of assembly, interacts with CTBP1 and HDAC3. Interacts with CTNNB1 and CTNND1. Interacts with SUFU. Post-translationally, C-terminus cleavage is induced by interaction with CTNND1 and enhances by Src tyrosine kinase. Expressed at high levels in kidney, and at lower levels in heart and lung.

The protein resides in the nucleus speckle. The protein localises to the cytoplasm. In terms of biological role, can act either as a transcriptional repressor or as a transcriptional activator, depending on the cell context. Acts as a repressor of the Hedgehog signaling pathway. Represses the Hedgehog-dependent expression of Wnt4. Necessary to maintain the differentiated epithelial phenotype in renal cells through the inhibition of SNAI1, which itself induces the epithelial-to-mesenchymal transition. Represses transcriptional activation by CTNNB1 in the Wnt signaling pathway. May act by recruiting the corepressors CTBP1 and HDAC3. May be involved in neuron differentiation. The protein is Zinc finger protein GLIS2 (Glis2) of Mus musculus (Mouse).